We begin with the raw amino-acid sequence, 155 residues long: Peptide deformylase 2 (155 aa).

Fe cation contacts are provided by cysteine 90 and histidine 132. Glutamate 133 is a catalytic residue. Fe cation is bound at residue histidine 136.

It belongs to the polypeptide deformylase family. Requires Fe(2+) as cofactor.

It catalyses the reaction N-terminal N-formyl-L-methionyl-[peptide] + H2O = N-terminal L-methionyl-[peptide] + formate. Removes the formyl group from the N-terminal Met of newly synthesized proteins. Requires at least a dipeptide for an efficient rate of reaction. N-terminal L-methionine is a prerequisite for activity but the enzyme has broad specificity at other positions. The sequence is that of Peptide deformylase 2 from Clostridium perfringens (strain 13 / Type A).